The following is a 119-amino-acid chain: DNA-binding protein inhibitor ID-3 (119 aa).

One can recognise a bHLH domain in the interval 28–80 (RGKSPSTEEPLSLLDDMNHCYSRLRELVPGVPRGTQLSQVEILQRVIDYILDL). The segment at 35-87 (EEPLSLLDDMNHCYSRLRELVPGVPRGTQLSQVEILQRVIDYILDLQVVLAEP) is interaction with IFI204.

Homodimer, and heterodimer with other HLH proteins. Interacts with CLOCK and BMAL1. Interacts with COPS5 and COPS7A. Interacts with IFI204. Interacts with GATA4 and NKX2-5. Interacts with ANKRD2; both proteins cooperate in myoblast differentiation. In terms of processing, polyubiquitinated; which is favored by Ifi204 and leads to proteasomal degradation. As to expression, expressed by myoblasts (at protein level).

Its subcellular location is the nucleus. It localises to the cytoplasm. Transcriptional regulator (lacking a basic DNA binding domain) which negatively regulates the basic helix-loop-helix (bHLH) transcription factors by forming heterodimers and inhibiting their DNA binding and transcriptional activity. Implicated in regulating a variety of cellular processes, including cellular growth, senescence, differentiation, apoptosis, angiogenesis, and neoplastic transformation. Involved in myogenesis by inhibiting skeletal muscle and cardiac myocyte differentiation and promoting muscle precursor cells proliferation. Inhibits the binding of E2A-containing protein complexes to muscle creatine kinase E-box enhancer. Regulates the circadian clock by repressing the transcriptional activator activity of the CLOCK-BMAL1 heterodimer. This Mus musculus (Mouse) protein is DNA-binding protein inhibitor ID-3 (Id3).